The following is a 123-amino-acid chain: Large ribosomal subunit protein bL12 (123 aa).

This sequence belongs to the bacterial ribosomal protein bL12 family. As to quaternary structure, homodimer. Part of the ribosomal stalk of the 50S ribosomal subunit. Forms a multimeric L10(L12)X complex, where L10 forms an elongated spine to which 2 to 4 L12 dimers bind in a sequential fashion. Binds GTP-bound translation factors.

In terms of biological role, forms part of the ribosomal stalk which helps the ribosome interact with GTP-bound translation factors. Is thus essential for accurate translation. This Ectopseudomonas mendocina (strain ymp) (Pseudomonas mendocina) protein is Large ribosomal subunit protein bL12.